Consider the following 138-residue polypeptide: Venom allergen 2 (138 aa).

The first 19 residues, 1 to 19 (MKSFVLATCLLGFAQIIYA), serve as a signal peptide directing secretion.

This sequence belongs to the ant venom allergen 2/4 family. Homodimer; disulfide-linked. In terms of tissue distribution, expressed by the venom gland.

It is found in the secreted. The polypeptide is Venom allergen 2 (Solenopsis saevissima (Fire ant)).